The primary structure comprises 189 residues: MASLYLLLLLPLFLALILAATITESKSFSTTVKAPYPGHKPDKLTHLHFYFHDIVSGDKPTSVQVANGPTTNSSATGFGLVAVVDDKLTVGPEITSEEVGRAQGMYASADQNKLGLLMAFNLVFTKGKFSDSTVAMYGRNPVLSKVREMPIIGGTGAFRFGRGYALAKTLVFNITSGDAVVEYNVYIWH.

The signal sequence occupies residues 1-19; it reads MASLYLLLLLPLFLALILA. Asn72 and Asn173 each carry an N-linked (GlcNAc...) asparagine glycan.

Belongs to the plant dirigent protein family. Homodimer.

The protein resides in the secreted. In terms of biological role, dirigent proteins impart stereoselectivity on the phenoxy radical-coupling reaction, yielding optically active lignans from two molecules of coniferyl alcohol in the biosynthesis of lignans, flavonolignans, and alkaloids and thus plays a central role in plant secondary metabolism. The chain is Dirigent protein 21 (DIR21) from Arabidopsis thaliana (Mouse-ear cress).